Reading from the N-terminus, the 387-residue chain is MSEYLFTSESVSEGHPDKVADQISDSILDAILEQDPTARVAAETLTNTGLVVLAGEITTTANVDYIKIARDTIKRIGYDNADYGIDYKSCAVLVAYDKQSPDIAQGVNNANDDPLDQGAGDQGLMFGYACDETPQLLPLPIWLSHRMVERQSQLRKDGRLPWLRPDAKSQVTIQYMDGKPHKIDTVLISTQHAPDISLDQVRESVIEEIIKPTLPQELIKGDIKFLVNPTGRFVIGGPQGDCGLTGRKIIVDTYGGAAPHGGGAFSGKDPSKVDRSAAYAGRYVAKNIVAAGLASRCLVQVSYAIGVAKPTSVMVETYGTGKVSNEILTQLVLDHFDLRPKGIVKMLDLLRPIYAKTAAYGHFGRDEPEFTWEATDKAALLRAAAGL.

Residue H15 participates in ATP binding. D17 lines the Mg(2+) pocket. Residue E43 participates in K(+) binding. E56 and Q99 together coordinate L-methionine. Positions 99–109 (QSPDIAQGVNN) are flexible loop. ATP contacts are provided by residues 166-168 (DAK), 232-233 (RF), D241, 247-248 (RK), A264, and K268. Residue D241 coordinates L-methionine. K272 is a binding site for L-methionine.

Belongs to the AdoMet synthase family. In terms of assembly, homotetramer; dimer of dimers. It depends on Mg(2+) as a cofactor. Requires K(+) as cofactor.

It is found in the cytoplasm. It catalyses the reaction L-methionine + ATP + H2O = S-adenosyl-L-methionine + phosphate + diphosphate. Its pathway is amino-acid biosynthesis; S-adenosyl-L-methionine biosynthesis; S-adenosyl-L-methionine from L-methionine: step 1/1. Functionally, catalyzes the formation of S-adenosylmethionine (AdoMet) from methionine and ATP. The overall synthetic reaction is composed of two sequential steps, AdoMet formation and the subsequent tripolyphosphate hydrolysis which occurs prior to release of AdoMet from the enzyme. In Methylobacillus flagellatus (strain ATCC 51484 / DSM 6875 / VKM B-1610 / KT), this protein is S-adenosylmethionine synthase.